Reading from the N-terminus, the 103-residue chain is Small ribosomal subunit protein uS10 (103 aa).

It belongs to the universal ribosomal protein uS10 family. In terms of assembly, part of the 30S ribosomal subunit.

Functionally, involved in the binding of tRNA to the ribosomes. This chain is Small ribosomal subunit protein uS10, found in Shewanella denitrificans (strain OS217 / ATCC BAA-1090 / DSM 15013).